The chain runs to 161 residues: Globin CTT-VIIB-3 (161 aa).

Residues 1–16 (MKFFAVLALCIVGAIA) form the signal peptide. Residues 18–161 (PLTADEASLV…NTYAIVVPRL (144 aa)) enclose the Globin domain. 2 residues coordinate heme b: His-76 and His-111.

Belongs to the globin family. As to quaternary structure, homodimer.

The sequence is that of Globin CTT-VIIB-3 (CTT-7B3) from Chironomus thummi thummi (Midge).